The sequence spans 256 residues: Large ribosomal subunit protein bL21c (256 aa).

Residues 1–55 (MASATLAFSCSSLCATLKLPQNLNPLLLNVPPLSKPFSGVVSPPSLSRLSLLPVA) constitute a chloroplast transit peptide.

Component of the chloroplast large ribosomal subunit (LSU). Mature 70S chloroplast ribosomes of higher plants consist of a small (30S) and a large (50S) subunit. The 30S small subunit contains 1 molecule of ribosomal RNA (16S rRNA) and 24 different proteins. The 50S large subunit contains 3 rRNA molecules (23S, 5S and 4.5S rRNA) and 33 different proteins.

The protein localises to the plastid. It localises to the chloroplast. Its function is as follows. Component of the chloroplast ribosome (chloro-ribosome), a dedicated translation machinery responsible for the synthesis of chloroplast genome-encoded proteins, including proteins of the transcription and translation machinery and components of the photosynthetic apparatus. The sequence is that of Large ribosomal subunit protein bL21c (RPL21) from Spinacia oleracea (Spinach).